A 161-amino-acid chain; its full sequence is TM2 domain-containing protein DDB_G0278163 (161 aa).

Over 1–24 the chain is Cytoplasmic; that stretch reads MGHHHHHHGGSGHHHHHHHHGSGH. Residues 25–45 form a helical membrane-spanning segment; it reads YGGGAVLVTPIVTPVPVVYGS. Over 46–54 the chain is Extracellular; sequence RSSSYCPKS. Residues 52 to 100 form the TM2 domain; that stretch reads PKSMTVAYVLWFFFGILGFHRLYLGRVGTFFLYFFTAGVFGLGWLFDAF. The helical transmembrane segment at 55 to 75 threads the bilayer; the sequence is MTVAYVLWFFFGILGFHRLYL. The Cytoplasmic portion of the chain corresponds to 76–80; it reads GRVGT. The helical transmembrane segment at 81–101 threads the bilayer; that stretch reads FFLYFFTAGVFGLGWLFDAFY. Residues 102-161 lie on the Extracellular side of the membrane; the sequence is THKMVKHYNECEFTKSCVGQSPPATIPIYQSEGAYPTYQQVPQQPPQFYQPQQQQPQYQP. The segment at 139-161 is disordered; sequence YQQVPQQPPQFYQPQQQQPQYQP.

This sequence belongs to the TM2 family.

It is found in the membrane. This chain is TM2 domain-containing protein DDB_G0278163, found in Dictyostelium discoideum (Social amoeba).